Here is a 321-residue protein sequence, read N- to C-terminus: NADPH-dependent codeinone reductase 1-2 (321 aa).

Thr-27 and Asp-51 together coordinate NADPH. Catalysis depends on proton donor residues Tyr-56 and His-119. Residue His-119 coordinates substrate. Positions 165, 187, 214, 216, 264, and 269 each coordinate NADPH. The disordered stretch occupies residues 299 to 321 (SADFLLSPTGPFKTEEEFWDEKD).

This sequence belongs to the aldo/keto reductase family. As to expression, latex secreting cells (laticifer cells). Expressed constitutively in all organs with highest levels in capsules. Restricted to the parietal region of sieve elements adjacent or proximal to laticifers in roots, stems, leaves and carpels.

It localises to the cytoplasm. Its subcellular location is the cytosol. The catalysed reaction is codeine + NADP(+) = codeinone + NADPH + H(+). It catalyses the reaction neopine + NADP(+) = neopinone + NADPH + H(+). It carries out the reaction morphine + NADP(+) = morphinone + NADPH + H(+). The enzyme catalyses neomorphine + NADP(+) = neomorphinone + NADPH + H(+). It functions in the pathway alkaloid biosynthesis; morphine biosynthesis. NADPH-dependent codeinone reductase involved in biosynthesis of morphinan-type benzylisoquinoline and opiate alkaloids natural products. Reduces codeinone to codeine in the penultimate step in morphine biosynthesis. Can use morphinone, hydrocodone and hydromorphone as substrate during reductive reaction with NADPH as cofactor, and morphine and dihydrocodeine as substrate during oxidative reaction with NADP as cofactor. Converts morphinone to morphine, and neomorphinone to neomorphine. Reduces irreversibly neopinone, a spontaneous isomer of codeinone, to neopine; in planta, neopine levels are limited to low levels. The chain is NADPH-dependent codeinone reductase 1-2 from Papaver somniferum (Opium poppy).